A 339-amino-acid chain; its full sequence is DNA-directed RNA polymerase subunit alpha (339 aa).

The interval 1–235 (MTIQKNWQEL…DQLNVFVNFE (235 aa)) is alpha N-terminal domain (alpha-NTD). The interval 251-339 (FNPAFLKKVD…ELAKRFEDHY (89 aa)) is alpha C-terminal domain (alpha-CTD).

It belongs to the RNA polymerase alpha chain family. As to quaternary structure, homodimer. The RNAP catalytic core consists of 2 alpha, 1 beta, 1 beta' and 1 omega subunit. When a sigma factor is associated with the core the holoenzyme is formed, which can initiate transcription.

The catalysed reaction is RNA(n) + a ribonucleoside 5'-triphosphate = RNA(n+1) + diphosphate. Functionally, DNA-dependent RNA polymerase catalyzes the transcription of DNA into RNA using the four ribonucleoside triphosphates as substrates. The protein is DNA-directed RNA polymerase subunit alpha of Rhodopseudomonas palustris (strain HaA2).